The following is a 498-amino-acid chain: ATP synthase subunit beta, chloroplastic (498 aa).

Position 172–179 (172–179 (GGAGVGKT)) interacts with ATP.

It belongs to the ATPase alpha/beta chains family. F-type ATPases have 2 components, CF(1) - the catalytic core - and CF(0) - the membrane proton channel. CF(1) has five subunits: alpha(3), beta(3), gamma(1), delta(1), epsilon(1). CF(0) has four main subunits: a(1), b(1), b'(1) and c(9-12).

It is found in the plastid. It localises to the chloroplast thylakoid membrane. The enzyme catalyses ATP + H2O + 4 H(+)(in) = ADP + phosphate + 5 H(+)(out). Produces ATP from ADP in the presence of a proton gradient across the membrane. The catalytic sites are hosted primarily by the beta subunits. The protein is ATP synthase subunit beta, chloroplastic of Panax ginseng (Korean ginseng).